A 96-amino-acid chain; its full sequence is DNA-binding protein Saci_1468 (96 aa).

Belongs to the PDCD5 family.

This chain is DNA-binding protein Saci_1468, found in Sulfolobus acidocaldarius (strain ATCC 33909 / DSM 639 / JCM 8929 / NBRC 15157 / NCIMB 11770).